Reading from the N-terminus, the 178-residue chain is ATP synthase subunit b (178 aa).

A helical membrane pass occupies residues 30–50 (FFFVLAIFLIVLAVIGTFVVP).

It belongs to the ATPase B chain family. F-type ATPases have 2 components, F(1) - the catalytic core - and F(0) - the membrane proton channel. F(1) has five subunits: alpha(3), beta(3), gamma(1), delta(1), epsilon(1). F(0) has three main subunits: a(1), b(2) and c(10-14). The alpha and beta chains form an alternating ring which encloses part of the gamma chain. F(1) is attached to F(0) by a central stalk formed by the gamma and epsilon chains, while a peripheral stalk is formed by the delta and b chains.

The protein resides in the cell membrane. In terms of biological role, f(1)F(0) ATP synthase produces ATP from ADP in the presence of a proton or sodium gradient. F-type ATPases consist of two structural domains, F(1) containing the extramembraneous catalytic core and F(0) containing the membrane proton channel, linked together by a central stalk and a peripheral stalk. During catalysis, ATP synthesis in the catalytic domain of F(1) is coupled via a rotary mechanism of the central stalk subunits to proton translocation. Functionally, component of the F(0) channel, it forms part of the peripheral stalk, linking F(1) to F(0). The protein is ATP synthase subunit b of Mycobacterium avium (strain 104).